The following is a 572-amino-acid chain: Urease subunit alpha (572 aa).

The Urease domain maps to 133–572 (GGIDLHVHYI…TSLSQRYFLF (440 aa)). His138, His140, and Lys221 together coordinate Ni(2+). Lys221 carries the post-translational modification N6-carboxylysine. His223 serves as a coordination point for substrate. The Ni(2+) site is built by His250 and His276. Catalysis depends on His324, which acts as the Proton donor. Residue Asp364 participates in Ni(2+) binding.

It belongs to the metallo-dependent hydrolases superfamily. Urease alpha subunit family. In terms of assembly, heterotrimer of UreA (gamma), UreB (beta) and UreC (alpha) subunits. Three heterotrimers associate to form the active enzyme. The cofactor is Ni cation. Carboxylation allows a single lysine to coordinate two nickel ions.

It is found in the cytoplasm. The catalysed reaction is urea + 2 H2O + H(+) = hydrogencarbonate + 2 NH4(+). Its pathway is nitrogen metabolism; urea degradation; CO(2) and NH(3) from urea (urease route): step 1/1. This chain is Urease subunit alpha, found in Streptococcus thermophilus (strain CNRZ 1066).